Reading from the N-terminus, the 444-residue chain is Glutamyl-tRNA reductase (444 aa).

Substrate contacts are provided by residues 49 to 52 (TCNR), Ser-109, 114 to 116 (ETQ), and Gln-120. Catalysis depends on Cys-50, which acts as the Nucleophile. Position 189-194 (189-194 (GAGKMG)) interacts with NADP(+).

The protein belongs to the glutamyl-tRNA reductase family. In terms of assembly, homodimer.

The enzyme catalyses (S)-4-amino-5-oxopentanoate + tRNA(Glu) + NADP(+) = L-glutamyl-tRNA(Glu) + NADPH + H(+). It functions in the pathway porphyrin-containing compound metabolism; protoporphyrin-IX biosynthesis; 5-aminolevulinate from L-glutamyl-tRNA(Glu): step 1/2. In terms of biological role, catalyzes the NADPH-dependent reduction of glutamyl-tRNA(Glu) to glutamate 1-semialdehyde (GSA). In Bacillus cereus (strain AH187), this protein is Glutamyl-tRNA reductase.